The sequence spans 192 residues: Probable thymidylate kinase (192 aa).

8–15 is a binding site for ATP; that stretch reads GIDGSGKS.

This sequence belongs to the thymidylate kinase family.

It carries out the reaction dTMP + ATP = dTDP + ADP. This is Probable thymidylate kinase from Pyrobaculum aerophilum (strain ATCC 51768 / DSM 7523 / JCM 9630 / CIP 104966 / NBRC 100827 / IM2).